A 550-amino-acid polypeptide reads, in one-letter code: (S)-beta-bisabolene synthase (550 aa).

Residues Asp-303, Asp-307, Ser-451, and Glu-455 each coordinate Mg(2+). The DDXXD motif signature appears at 303–307 (DDTYD).

It belongs to the terpene synthase family. Tpsa subfamily. Mg(2+) is required as a cofactor. The cofactor is Mn(2+). Expressed only in young rhizomes. Not detected in leaves, roots and mature rhizomes.

It carries out the reaction (2E,6E)-farnesyl diphosphate = (S)-beta-bisabolene + diphosphate. Functionally, sesquiterpene synthase involved in the biosynthesis of bisabolene. The sequence is that of (S)-beta-bisabolene synthase (TPS1) from Zingiber officinale (Ginger).